The chain runs to 360 residues: Chorismate synthase (360 aa).

R46 contacts NADP(+). FMN is bound by residues 122–124, G282, 297–301, and R324; these read RAS and KPTPS.

It belongs to the chorismate synthase family. It depends on FMNH2 as a cofactor.

It carries out the reaction 5-O-(1-carboxyvinyl)-3-phosphoshikimate = chorismate + phosphate. It functions in the pathway metabolic intermediate biosynthesis; chorismate biosynthesis; chorismate from D-erythrose 4-phosphate and phosphoenolpyruvate: step 7/7. Catalyzes the anti-1,4-elimination of the C-3 phosphate and the C-6 proR hydrogen from 5-enolpyruvylshikimate-3-phosphate (EPSP) to yield chorismate, which is the branch point compound that serves as the starting substrate for the three terminal pathways of aromatic amino acid biosynthesis. This reaction introduces a second double bond into the aromatic ring system. The chain is Chorismate synthase from Archaeoglobus fulgidus (strain ATCC 49558 / DSM 4304 / JCM 9628 / NBRC 100126 / VC-16).